Consider the following 296-residue polypeptide: MHTRFENAFQQLSASLQDALGPLIDKPDFAAMLTADEVNAVCEASQLDVDALAFALLPLAAACAQASISNFQVGAIAQGLSGNFYFGANMEFTAVQLQQTVHAEQSAVSHAWLRNERGLRAVTVNYTPCGHCRQFMNELRNAASLRIQLPGRQPAVLSHYLPDAFGPVDLQIDTLLMDDINHGATLQNVNALTRQALDAANRSHAPYSKAISGIALETASGNIYTGRYAENAAFNPSLPPLQAALNLMNLAGEDPSTIKYAAVVERRNAVVSHWAISQIMLAELGCTDVEHHFIEE.

CMP/dCMP-type deaminase domains are found at residues 48–168 (DVDA…FGPV) and 187–296 (QNVN…FIEE). Residue 89-91 (NME) coordinates substrate. A Zn(2+)-binding site is contributed by His102. Glu104 functions as the Proton donor in the catalytic mechanism. Cys129 and Cys132 together coordinate Zn(2+).

This sequence belongs to the cytidine and deoxycytidylate deaminase family. In terms of assembly, homodimer. It depends on Zn(2+) as a cofactor.

The enzyme catalyses cytidine + H2O + H(+) = uridine + NH4(+). It catalyses the reaction 2'-deoxycytidine + H2O + H(+) = 2'-deoxyuridine + NH4(+). This enzyme scavenges exogenous and endogenous cytidine and 2'-deoxycytidine for UMP synthesis. The polypeptide is Cytidine deaminase (Pectobacterium atrosepticum (strain SCRI 1043 / ATCC BAA-672) (Erwinia carotovora subsp. atroseptica)).